The following is a 237-amino-acid chain: Putative glutathione-dependent formaldehyde-activating enzyme (237 aa).

The 115-residue stretch at 38 to 152 (ITLICHCPPS…LGQSGGSEGE (115 aa)) folds into the CENP-V/GFA domain. Zn(2+) contacts are provided by Cys-42, Cys-44, Cys-67, Cys-69, Cys-72, Cys-114, and Cys-117.

It belongs to the Gfa family. Zn(2+) serves as cofactor.

The enzyme catalyses S-(hydroxymethyl)glutathione = glutathione + formaldehyde. It functions in the pathway one-carbon metabolism; formaldehyde degradation; formate from formaldehyde (glutathione route): step 1/3. Catalyzes the condensation of formaldehyde and glutathione to S-hydroxymethylglutathione. This is Putative glutathione-dependent formaldehyde-activating enzyme from Sordaria macrospora (strain ATCC MYA-333 / DSM 997 / K(L3346) / K-hell).